A 74-amino-acid polypeptide reads, in one-letter code: DNA-directed RNA polymerase subunit omega (74 aa).

This sequence belongs to the RNA polymerase subunit omega family. The RNAP catalytic core consists of 2 alpha, 1 beta, 1 beta' and 1 omega subunit. When a sigma factor is associated with the core the holoenzyme is formed, which can initiate transcription.

The catalysed reaction is RNA(n) + a ribonucleoside 5'-triphosphate = RNA(n+1) + diphosphate. In terms of biological role, promotes RNA polymerase assembly. Latches the N- and C-terminal regions of the beta' subunit thereby facilitating its interaction with the beta and alpha subunits. This chain is DNA-directed RNA polymerase subunit omega, found in Campylobacter jejuni subsp. jejuni serotype O:6 (strain 81116 / NCTC 11828).